A 136-amino-acid chain; its full sequence is Large ribosomal subunit protein uL16c (136 aa).

This sequence belongs to the universal ribosomal protein uL16 family. Part of the 50S ribosomal subunit.

The protein localises to the plastid. The protein resides in the chloroplast. The chain is Large ribosomal subunit protein uL16c from Oryza nivara (Indian wild rice).